The sequence spans 310 residues: Quinolinate synthase 2 (310 aa).

Positions 30 and 47 each coordinate iminosuccinate. C92 is a [4Fe-4S] cluster binding site. Residues 118 to 120 (YVN) and S135 contribute to the iminosuccinate site. C177 lines the [4Fe-4S] cluster pocket. Iminosuccinate is bound by residues 203–205 (HPE) and T220. C265 serves as a coordination point for [4Fe-4S] cluster.

This sequence belongs to the quinolinate synthase family. Type 2 subfamily. [4Fe-4S] cluster serves as cofactor.

The protein localises to the cytoplasm. It catalyses the reaction iminosuccinate + dihydroxyacetone phosphate = quinolinate + phosphate + 2 H2O + H(+). It participates in cofactor biosynthesis; NAD(+) biosynthesis; quinolinate from iminoaspartate: step 1/1. Catalyzes the condensation of iminoaspartate with dihydroxyacetone phosphate to form quinolinate. The polypeptide is Quinolinate synthase 2 (Methanosarcina acetivorans (strain ATCC 35395 / DSM 2834 / JCM 12185 / C2A)).